The following is a 178-amino-acid chain: uncharacterized protein (178 aa).

Its function is as follows. This protein is non-essential for virus function. This is an uncharacterized protein from Sulfolobus spindle-shape virus 1 (SSV1).